A 229-amino-acid chain; its full sequence is MEAEVEEEEEDMFEDAVCTTQARVNTPLSVITEAFEDLADLVKPQRSDEIDEDELRLDDFCSACTHVSVLFNCLGFAFKFAEMEYIAKVKDLVEASKTFETLHNILDLDVEKETVKTPGSHSRNLRRVRQGLDLIRAIFEQFLIADDYSLKDAATTAYTEVCAPFHTWAVRTAVYAGMYTLPTRDQLLLRLNETDQSVEKNMRRYMEASRPIIEYIDKLYIERNIKLDW.

5 residues coordinate an N-acylsphingoid base 1-phosphate: Glu84, Lys88, Arg123, Arg127, and His166.

The protein belongs to the GLTP family.

This chain is ACD11 homolog protein, found in Arabidopsis thaliana (Mouse-ear cress).